A 337-amino-acid chain; its full sequence is Transaldolase (337 aa).

The Nuclear localization signal motif lies at 1–10 (MSGSPVKRQR). At Lys-115 the chain carries N6-acetyllysine. Catalysis depends on Lys-142, which acts as the Schiff-base intermediate with substrate. The residue at position 219 (Lys-219) is an N6-acetyllysine. Phosphoserine occurs at positions 237 and 256. N6-acetyllysine is present on residues Lys-269, Lys-286, and Lys-321.

It belongs to the transaldolase family. Type 1 subfamily. In terms of assembly, homodimer. Interacts with KPNA1 and KPNA4.

It is found in the nucleus. It localises to the cytoplasm. It carries out the reaction D-sedoheptulose 7-phosphate + D-glyceraldehyde 3-phosphate = D-erythrose 4-phosphate + beta-D-fructose 6-phosphate. The protein operates within carbohydrate degradation; pentose phosphate pathway; D-glyceraldehyde 3-phosphate and beta-D-fructose 6-phosphate from D-ribose 5-phosphate and D-xylulose 5-phosphate (non-oxidative stage): step 2/3. Functionally, catalyzes the rate-limiting step of the non-oxidative phase in the pentose phosphate pathway. Catalyzes the reversible conversion of sedheptulose-7-phosphate and D-glyceraldehyde 3-phosphate into erythrose-4-phosphate and beta-D-fructose 6-phosphate. This is Transaldolase (Taldo1) from Rattus norvegicus (Rat).